A 473-amino-acid polypeptide reads, in one-letter code: Photosystem II CP43 reaction center protein (473 aa).

Positions 1–14 are excised as a propeptide; the sequence is MKTLYSLRRFYPVE. At Thr-15 the chain carries N-acetylthreonine. Phosphothreonine is present on Thr-15. 5 consecutive transmembrane segments (helical) span residues 69–93, 134–155, 178–200, 255–275, and 291–312; these read LFEVAHFVPEKPMYEQGLILLPHLA, LLGPETLEESFPFFGYVWKDRN, KALYFGGVYDTWAPGGGDVRKIT, KPFAWARRALVWSGEAYLSYS, and WFNNTAYPSEFYGPTGPEASQA. Glu-367 lines the [CaMn4O5] cluster pocket. A helical membrane pass occupies residues 447-471; it reads RARAAAAGFEKGIDRDFEPVLSMTP.

Belongs to the PsbB/PsbC family. PsbC subfamily. PSII is composed of 1 copy each of membrane proteins PsbA, PsbB, PsbC, PsbD, PsbE, PsbF, PsbH, PsbI, PsbJ, PsbK, PsbL, PsbM, PsbT, PsbX, PsbY, PsbZ, Psb30/Ycf12, at least 3 peripheral proteins of the oxygen-evolving complex and a large number of cofactors. It forms dimeric complexes. The cofactor is Binds multiple chlorophylls and provides some of the ligands for the Ca-4Mn-5O cluster of the oxygen-evolving complex. It may also provide a ligand for a Cl- that is required for oxygen evolution. PSII binds additional chlorophylls, carotenoids and specific lipids..

The protein resides in the plastid. The protein localises to the chloroplast thylakoid membrane. One of the components of the core complex of photosystem II (PSII). It binds chlorophyll and helps catalyze the primary light-induced photochemical processes of PSII. PSII is a light-driven water:plastoquinone oxidoreductase, using light energy to abstract electrons from H(2)O, generating O(2) and a proton gradient subsequently used for ATP formation. The polypeptide is Photosystem II CP43 reaction center protein (Populus trichocarpa (Western balsam poplar)).